The primary structure comprises 69 residues: Large ribosomal subunit protein eL38z/eL38y (69 aa).

This sequence belongs to the eukaryotic ribosomal protein eL38 family.

The polypeptide is Large ribosomal subunit protein eL38z/eL38y (RPL38A) (Arabidopsis thaliana (Mouse-ear cress)).